Reading from the N-terminus, the 226-residue chain is MPTALEDYQKNFLELAIESKALRFGEFTLKSGRVSPYFFNLGLFNTGKLLSNLATAYAIAIIQSELKFDVIFGPAYKGIPLASIVCVKLAEIGGSKFQDVKYAFNRKEAKDHGEGGNIVGAALKDQKILIIDDVMTAGTAINEAFEIIAKEEGKVVGSIIALDRQEVVNTEDTEVLSATQSVSKRYDIPVLSIVNLSNIISYLDGRISVEEREKMEQYRQTYGASA.

Position 30 (Lys30) interacts with 5-phospho-alpha-D-ribose 1-diphosphate. 38 to 39 lines the orotate pocket; sequence FF. 5-phospho-alpha-D-ribose 1-diphosphate-binding positions include 76–77, Arg106, Lys107, Lys110, His112, and 132–140; these read YK and DDVMTAGTA. Orotate contacts are provided by Thr136 and Arg164.

It belongs to the purine/pyrimidine phosphoribosyltransferase family. PyrE subfamily. As to quaternary structure, homodimer.

The catalysed reaction is orotidine 5'-phosphate + diphosphate = orotate + 5-phospho-alpha-D-ribose 1-diphosphate. It functions in the pathway pyrimidine metabolism; UMP biosynthesis via de novo pathway; UMP from orotate: step 1/2. In terms of biological role, catalyzes the transfer of a ribosyl phosphate group from 5-phosphoribose 1-diphosphate to orotate, leading to the formation of orotidine monophosphate (OMP). This chain is Orotate phosphoribosyltransferase (URA5), found in Kluyveromyces lactis (strain ATCC 8585 / CBS 2359 / DSM 70799 / NBRC 1267 / NRRL Y-1140 / WM37) (Yeast).